Consider the following 316-residue polypeptide: Probable thioesterase lcsE (316 aa).

This sequence belongs to the AMT4 thioesterase family.

It functions in the pathway secondary metabolite biosynthesis. In terms of biological role, probable thioesterase; part of the gene cluster that mediates the biosynthesis of the lipopeptide antibiotics leucinostatins that show extensive biological activities, including antimalarial, antiviral, antibacterial, antifungal, and antitumor activities, as well as phytotoxic. Leucinostatin A contains nine amino acid residues, including the unusual amino acid 4-methyl-L-proline (MePro), 2-amino-6-hydroxy-4-methyl-8-oxodecanoic acid (AHyMeOA), 3-hydroxyleucine (HyLeu), alpha-aminoisobutyric acid (AIB), beta-Ala, a 4-methylhex-2-enoic acid at the N-terminus as well as a N1,N1-dimethylpropane-1,2-diamine (DPD) at the C-terminus. The biosynthesis of leucinostatins is probably initiated with the assembly of 4-methylhex-2-enoic acid by a reducing PKS. Two reducing polyketide synthases, lcsB and lcsC, have been identified in the cluster and it is not clear which is the one that assembles 4-methylhex-2-enoic acid since both contain KS, AT, DH, cMT, ER, KR and ACP domains. The polyketide residue might be transferred to the NRPS lcsA, mediated by two additional enzymes, the acyl-CoA ligase lcsD and the thioesterase lcsE. The linear polyketide carboxylic acid, which is released from PKS, is converted to a CoA thioester by lcsD, and then lcsE hydrolyzes the thiol bond and shuttles the polyketide intermediate to lcsA. The C domain of the first module catalyzed the condensation of 4-methylhex-2-enoic acid and MePro carried by domain A1, followed by successive condensations of nine amino acids to trigger the elongation of the linear peptide. A5 and A6 domains of lcsA are proposed to incorporate leucine, A2 AHyMeOA, and A3 incorporates HyLeu. A4, A7 and A8 incorporate AIB. The AHyMeOA in leucinostatin A activated by the A2 might be produced by the second PKS (lcsB or lcsC) present within the cluster. The MePro is probably produced via leucine cyclization and may originate from a separate pathway, independent of the cluster. Another nonproteinogenic amino acid, beta-Ala, could be produced by an aspartic acid decarboxylase also localized outside of the cluster. Two candidates are VFPBJ_01400 and VFPBJ_10476. The final peptide scaffold may be released by the NAD(P)H-dependent thioester reductase (TE) at the C-terminal region of lcsA. Transamination of the lcsA product by the transaminase lcsP may produce DPD at the C-terminus. Further hydroxylation steps performed alternatively by the cytochrome P450 monooxygenases lcsI, lcsK and lcsN then yield the non-methylated leucinostatins precursor. It is also possible that leucines can be hydroxylated prior to their incorporation into the peptide. Varying extents of methylation then lead to the formation of leucinostatins A and B. The chain is Probable thioesterase lcsE from Purpureocillium lilacinum (Paecilomyces lilacinus).